A 266-amino-acid chain; its full sequence is Probable sulfate transport system permease protein cysT (266 aa).

7 helical membrane-spanning segments follow: residues 12–32 (ILLF…FLLI), 59–79 (MAFY…WVLT), 91–111 (AAVD…LATV), 129–149 (IVFT…PFVI), 181–201 (VILP…FSRA), 206–226 (GSIV…SVLI), and 236–256 (LGAS…LLLI). An ABC transmembrane type-1 domain is found at 53–257 (YLLTVQMAFY…IALFTLLLIN (205 aa)).

Belongs to the binding-protein-dependent transport system permease family. CysTW subfamily.

The protein localises to the plastid. It is found in the chloroplast membrane. Part of the ABC transporter complex cysAWTP (TC 3.A.1.6.1) involved in sulfate/thiosulfate import. Probably responsible for the translocation of the substrate across the membrane. The polypeptide is Probable sulfate transport system permease protein cysT (cysT) (Chlorella vulgaris (Green alga)).